The primary structure comprises 538 residues: Phosphoenolpyruvate carboxykinase (ATP) (538 aa).

Substrate is bound by residues Arg-61, Tyr-195, and Lys-201. Residues Lys-201, His-220, and 236–244 (GLSGTGKTT) contribute to the ATP site. Mn(2+) is bound by residues Lys-201 and His-220. Mn(2+) is bound at residue Asp-257. Residues Glu-285, Arg-323, and Thr-449 each contribute to the ATP site. Arg-323 is a binding site for substrate.

The protein belongs to the phosphoenolpyruvate carboxykinase (ATP) family. Requires Mn(2+) as cofactor.

It is found in the cytoplasm. The catalysed reaction is oxaloacetate + ATP = phosphoenolpyruvate + ADP + CO2. It functions in the pathway carbohydrate biosynthesis; gluconeogenesis. In terms of biological role, involved in the gluconeogenesis. Catalyzes the conversion of oxaloacetate (OAA) to phosphoenolpyruvate (PEP) through direct phosphoryl transfer between the nucleoside triphosphate and OAA. In Afipia carboxidovorans (strain ATCC 49405 / DSM 1227 / KCTC 32145 / OM5) (Oligotropha carboxidovorans), this protein is Phosphoenolpyruvate carboxykinase (ATP).